The chain runs to 212 residues: Thymidylate kinase (212 aa).

10 to 17 (GLDGAGKT) is an ATP binding site.

This sequence belongs to the thymidylate kinase family.

It carries out the reaction dTMP + ATP = dTDP + ADP. Its function is as follows. Phosphorylation of dTMP to form dTDP in both de novo and salvage pathways of dTTP synthesis. The polypeptide is Thymidylate kinase (Blochmanniella pennsylvanica (strain BPEN)).